Reading from the N-terminus, the 280-residue chain is 2-dehydro-3-deoxyphosphooctonate aldolase (280 aa).

Belongs to the KdsA family.

The protein resides in the cytoplasm. The enzyme catalyses D-arabinose 5-phosphate + phosphoenolpyruvate + H2O = 3-deoxy-alpha-D-manno-2-octulosonate-8-phosphate + phosphate. It functions in the pathway carbohydrate biosynthesis; 3-deoxy-D-manno-octulosonate biosynthesis; 3-deoxy-D-manno-octulosonate from D-ribulose 5-phosphate: step 2/3. The protein operates within bacterial outer membrane biogenesis; lipopolysaccharide biosynthesis. In Neisseria meningitidis serogroup B (strain ATCC BAA-335 / MC58), this protein is 2-dehydro-3-deoxyphosphooctonate aldolase.